Consider the following 164-residue polypeptide: UPF0304 protein MS2240 (164 aa).

Belongs to the UPF0304 family.

The chain is UPF0304 protein MS2240 from Mannheimia succiniciproducens (strain KCTC 0769BP / MBEL55E).